Reading from the N-terminus, the 150-residue chain is Placenta-specific protein 4 (150 aa).

As to expression, expressed in placental syncytiotrophoblast and choriocarcinoma cells.

In Homo sapiens (Human), this protein is Placenta-specific protein 4 (PLAC4).